Reading from the N-terminus, the 191-residue chain is uncharacterized protein (191 aa).

The 61-residue stretch at 3–63 folds into the HTH tetR-type domain; that stretch reads IDRKKLILEA…EIFTTLLKEM (61 aa). A DNA-binding region (H-T-H motif) is located at residues 26–45; that stretch reads TMDLVAKLANVGKGTIYTFF.

This is an uncharacterized protein from Bacillus subtilis (strain 168).